Reading from the N-terminus, the 258-residue chain is Small ribosomal subunit protein mS40 (258 aa).

The N-terminal 35 residues, 1–35 (MAASILNVLLRRLPGVSPFRGAYGVQVLLQTLCTK), are a transit peptide targeting the mitochondrion. S49 carries the post-translational modification Phosphoserine. The interval 223-258 (RLREESGPPPELMPEVPLTAPAEASSTEPGAPQSAL) is disordered.

This sequence belongs to the bacterial ribosomal protein bS18 family. Mitochondrion-specific ribosomal protein mS40 subfamily. Component of the mitochondrial ribosome small subunit (28S) which comprises a 12S rRNA and about 30 distinct proteins.

Its subcellular location is the mitochondrion. The protein is Small ribosomal subunit protein mS40 (MRPS18B) of Sus scrofa (Pig).